Reading from the N-terminus, the 505-residue chain is Lysine--tRNA ligase (505 aa).

Residues E415 and E422 each contribute to the Mg(2+) site.

The protein belongs to the class-II aminoacyl-tRNA synthetase family. Homodimer. It depends on Mg(2+) as a cofactor.

Its subcellular location is the cytoplasm. It catalyses the reaction tRNA(Lys) + L-lysine + ATP = L-lysyl-tRNA(Lys) + AMP + diphosphate. The chain is Lysine--tRNA ligase from Xanthomonas oryzae pv. oryzae (strain MAFF 311018).